A 228-amino-acid chain; its full sequence is Non-fluorescent flavoprotein (228 aa).

The protein belongs to the bacterial luciferase oxidoreductase family. In terms of assembly, homodimer. It depends on FMN as a cofactor.

In Photobacterium leiognathi, this protein is Non-fluorescent flavoprotein (luxF).